The following is a 195-amino-acid chain: uncharacterized protein (195 aa).

The span at 1–11 shows a compositional bias: polar residues; the sequence is MDYIVSPTSSE. Positions 1 to 118 are disordered; the sequence is MDYIVSPTSS…LDTEGGFVLS (118 aa). The segment covering 35–46 has biased composition (acidic residues); sequence SPEDITDSDEQN. Positions 47–63 are enriched in low complexity; it reads DTTTTTSEMSSTSSVPS. The span at 82 to 93 shows a compositional bias: basic and acidic residues; that stretch reads SDSKLIFDSDNK. The span at 94–110 shows a compositional bias: acidic residues; it reads DQDDEDDEDDEELEGLD.

This is an uncharacterized protein from Acanthamoeba polyphaga mimivirus (APMV).